The sequence spans 369 residues: Tyrosine-protein phosphatase non-receptor type 5 (369 aa).

A Phosphoserine; by PKA modification is found at S49. T59 is subject to Phosphothreonine; by MAPK. S72 carries the post-translational modification Phosphoserine; by MAPK. The Tyrosine-protein phosphatase domain maps to 104–359; sequence LQAEFFEIPM…QFVHHAMSLY (256 aa). Residues D265, 300 to 306, and Q344 contribute to the substrate site; that span reads CSAGIGR. C300 acts as the Phosphocysteine intermediate in catalysis.

This sequence belongs to the protein-tyrosine phosphatase family. Non-receptor class subfamily. Phosphorylation at Ser-49 by PKA deactivates PTPN5. Phosphorylation at Thr-59 and Ser-72 by MAPKs stabilizes the phosphatase, dephosphorylation of these sites results in ubiquitin-mediated degradation of the active phosphatase. Expressed in the central nervous system except in the cerebellum. Enriched within the striatum relative to other brain areas.

Its subcellular location is the cytoplasm. The enzyme catalyses O-phospho-L-tyrosyl-[protein] + H2O = L-tyrosyl-[protein] + phosphate. Functionally, may regulate the activity of several effector molecules involved in synaptic plasticity and neuronal cell survival, including MAPKs, Src family kinases and NMDA receptors. This is Tyrosine-protein phosphatase non-receptor type 5 (Ptpn5) from Rattus norvegicus (Rat).